Here is a 518-residue protein sequence, read N- to C-terminus: ATP synthase F(1) complex catalytic subunit beta, mitochondrial (518 aa).

6 residues coordinate ADP: Gly-199, Val-200, Gly-201, Lys-202, Thr-203, and Val-204. Gly-199 contributes to the ATP binding site. Positions 199, 200, 201, 202, and 203 each coordinate phosphate. ATP contacts are provided by Gly-201, Lys-202, Thr-203, and Val-204. Position 203 (Thr-203) interacts with Mg(2+). A Mg(2+)-binding site is contributed by Glu-228. Arg-229 is a binding site for ATP.

The protein belongs to the ATPase alpha/beta chains family. As to quaternary structure, homotrimer. Component of the ATP synthase complex composed at least of ATP5F1A/subunit alpha, ATP5F1B/subunit beta, ATP5MC1/subunit c (homooctomer), MT-ATP6/subunit a, MT-ATP8/subunit 8, ATP5ME/subunit e, ATP5MF/subunit f, ATP5MG/subunit g, ATP5MK/subunit k, ATP5MJ/subunit j, ATP5F1C/subunit gamma, ATP5F1D/subunit delta, ATP5F1E/subunit epsilon, ATP5PF/subunit F6, ATP5PB/subunit b, ATP5PD/subunit d, ATP5PO/subunit OSCP. ATP synthase complex consists of a soluble F(1) head domain (subunits alpha(3) and beta(3)) - the catalytic core - and a membrane F(0) domain - the membrane proton channel (subunits c, a, 8, e, f, g, k and j). These two domains are linked by a central stalk (subunits gamma, delta, and epsilon) rotating inside the F1 region and a stationary peripheral stalk (subunits F6, b, d, and OSCP).

The protein localises to the mitochondrion inner membrane. The catalysed reaction is ATP + H2O + 4 H(+)(in) = ADP + phosphate + 5 H(+)(out). Catalytic subunit beta, of the mitochondrial membrane ATP synthase complex (F(1)F(0) ATP synthase or Complex V) that produces ATP from ADP in the presence of a proton gradient across the membrane which is generated by electron transport complexes of the respiratory chain. ATP synthase complex consist of a soluble F(1) head domain - the catalytic core - and a membrane F(1) domain - the membrane proton channel. These two domains are linked by a central stalk rotating inside the F(1) region and a stationary peripheral stalk. During catalysis, ATP synthesis in the catalytic domain of F(1) is coupled via a rotary mechanism of the central stalk subunits to proton translocation. In vivo, can only synthesize ATP although its ATP hydrolase activity can be activated artificially in vitro. With the subunit alpha (ATP5F1A), forms the catalytic core in the F(1) domain. This Cyprinus carpio (Common carp) protein is ATP synthase F(1) complex catalytic subunit beta, mitochondrial.